The chain runs to 156 residues: Small ribosomal subunit protein uS7 (156 aa).

The protein belongs to the universal ribosomal protein uS7 family. As to quaternary structure, part of the 30S ribosomal subunit. Contacts proteins S9 and S11.

One of the primary rRNA binding proteins, it binds directly to 16S rRNA where it nucleates assembly of the head domain of the 30S subunit. Is located at the subunit interface close to the decoding center, probably blocks exit of the E-site tRNA. The chain is Small ribosomal subunit protein uS7 from Mycobacterium avium (strain 104).